Consider the following 536-residue polypeptide: CTP synthase (536 aa).

Residues 1–267 (MTKYIFVTGG…DQIVCDHLKL (267 aa)) form an amidoligase domain region. Ser-13 provides a ligand contact to CTP. Ser-13 lines the UTP pocket. ATP is bound at residue 14-19 (SIGKGI). Tyr-54 is an L-glutamine binding site. Asp-71 serves as a coordination point for ATP. Asp-71 and Glu-141 together coordinate Mg(2+). Residues 148 to 150 (DIE), 188 to 193 (KTKPTQ), and Lys-224 contribute to the CTP site. UTP is bound by residues 188-193 (KTKPTQ) and Lys-224. In terms of domain architecture, Glutamine amidotransferase type-1 spans 292–535 (KIALVGKYVE…ITAAVENSQA (244 aa)). Gly-354 is an L-glutamine binding site. The active-site Nucleophile; for glutamine hydrolysis is the Cys-381. L-glutamine-binding positions include 382–385 (LGMQ), Glu-405, and Arg-463. Catalysis depends on residues His-508 and Glu-510.

This sequence belongs to the CTP synthase family. Homotetramer.

The enzyme catalyses UTP + L-glutamine + ATP + H2O = CTP + L-glutamate + ADP + phosphate + 2 H(+). It carries out the reaction L-glutamine + H2O = L-glutamate + NH4(+). It catalyses the reaction UTP + NH4(+) + ATP = CTP + ADP + phosphate + 2 H(+). It functions in the pathway pyrimidine metabolism; CTP biosynthesis via de novo pathway; CTP from UDP: step 2/2. With respect to regulation, allosterically activated by GTP, when glutamine is the substrate; GTP has no effect on the reaction when ammonia is the substrate. The allosteric effector GTP functions by stabilizing the protein conformation that binds the tetrahedral intermediate(s) formed during glutamine hydrolysis. Inhibited by the product CTP, via allosteric rather than competitive inhibition. Functionally, catalyzes the ATP-dependent amination of UTP to CTP with either L-glutamine or ammonia as the source of nitrogen. Regulates intracellular CTP levels through interactions with the four ribonucleotide triphosphates. The protein is CTP synthase of Streptococcus mutans serotype c (strain ATCC 700610 / UA159).